Reading from the N-terminus, the 346-residue chain is Elongation factor Ts (346 aa).

Residues 80–83 (TDFV) are involved in Mg(2+) ion dislocation from EF-Tu.

It belongs to the EF-Ts family.

It localises to the cytoplasm. Its function is as follows. Associates with the EF-Tu.GDP complex and induces the exchange of GDP to GTP. It remains bound to the aminoacyl-tRNA.EF-Tu.GTP complex up to the GTP hydrolysis stage on the ribosome. This Streptococcus thermophilus (strain CNRZ 1066) protein is Elongation factor Ts.